We begin with the raw amino-acid sequence, 381 residues long: Succinyl-diaminopimelate desuccinylase (381 aa).

Histidine 72 is a binding site for Zn(2+). Aspartate 74 is a catalytic residue. Aspartate 105 provides a ligand contact to Zn(2+). The Proton acceptor role is filled by glutamate 139. 3 residues coordinate Zn(2+): glutamate 140, glutamate 168, and histidine 354.

This sequence belongs to the peptidase M20A family. DapE subfamily. In terms of assembly, homodimer. Zn(2+) is required as a cofactor. Requires Co(2+) as cofactor.

It carries out the reaction N-succinyl-(2S,6S)-2,6-diaminopimelate + H2O = (2S,6S)-2,6-diaminopimelate + succinate. It functions in the pathway amino-acid biosynthesis; L-lysine biosynthesis via DAP pathway; LL-2,6-diaminopimelate from (S)-tetrahydrodipicolinate (succinylase route): step 3/3. Its function is as follows. Catalyzes the hydrolysis of N-succinyl-L,L-diaminopimelic acid (SDAP), forming succinate and LL-2,6-diaminopimelate (DAP), an intermediate involved in the bacterial biosynthesis of lysine and meso-diaminopimelic acid, an essential component of bacterial cell walls. This chain is Succinyl-diaminopimelate desuccinylase, found in Shewanella sp. (strain MR-7).